The primary structure comprises 298 residues: Leucine-rich repeat-containing protein 55 (298 aa).

A signal peptide spans 1 to 34 (MGDTWAQLPWPGPPHSALLLVFFLLAAGVMHSDA). The region spanning 35–65 (GASCPVLCTCRNQVVDCSNQRLFSVPPDLPM) is the LRRNT domain. 2 disulfides stabilise this stretch: cysteine 38–cysteine 44 and cysteine 42–cysteine 51. 5 LRR repeats span residues 66-87 (DTRNLSLAHNRIAAVPPGYLTC), 90-111 (ELRVLDLRNNSLMELPPGLFLH), 114-135 (RLAHLDLSYNNLSHVPADMFRE), 138-160 (GLVHIDLSHNPWLRRVHPQAFQG), and 163-186 (HLRDLDLSYGGLAFLSLEALEGLP). The LRRCT domain maps to 196–251 (NPWVCGCTMEPLLKWLRNRIQRCTADSQLAECRGPPEVEGAPLFSLTEESFKACHL). Intrachain disulfides connect cysteine 200–cysteine 227 and cysteine 202–cysteine 249. A helical membrane pass occupies residues 259–279 (LFIAFVGFVVSIASVATNFLL).

Interacts with KCNMA1.

The protein localises to the cell membrane. Auxiliary protein of the large-conductance, voltage and calcium-activated potassium channel (BK alpha). Modulates gating properties by producing a marked shift in the BK channel's voltage dependence of activation in the hyperpolarizing direction, and in the absence of calcium. The polypeptide is Leucine-rich repeat-containing protein 55 (Lrrc55) (Rattus norvegicus (Rat)).